The following is a 143-amino-acid chain: Phosphoribosyl-AMP cyclohydrolase (143 aa).

D86 lines the Mg(2+) pocket. Residue C87 coordinates Zn(2+). Mg(2+) is bound by residues D88 and D90. C103 and C110 together coordinate Zn(2+).

The protein belongs to the PRA-CH family. In terms of assembly, homodimer. Requires Mg(2+) as cofactor. Zn(2+) is required as a cofactor.

The protein localises to the cytoplasm. The enzyme catalyses 1-(5-phospho-beta-D-ribosyl)-5'-AMP + H2O = 1-(5-phospho-beta-D-ribosyl)-5-[(5-phospho-beta-D-ribosylamino)methylideneamino]imidazole-4-carboxamide. Its pathway is amino-acid biosynthesis; L-histidine biosynthesis; L-histidine from 5-phospho-alpha-D-ribose 1-diphosphate: step 3/9. Functionally, catalyzes the hydrolysis of the adenine ring of phosphoribosyl-AMP. The polypeptide is Phosphoribosyl-AMP cyclohydrolase (Rhodospirillum rubrum (strain ATCC 11170 / ATH 1.1.1 / DSM 467 / LMG 4362 / NCIMB 8255 / S1)).